The sequence spans 254 residues: H-2 class II histocompatibility antigen, I-E alpha chain (254 aa).

The signal sequence occupies residues 1 to 24; sequence RSRALILGVLALTTMLSLCGGEDD. Positions 25–109 are alpha-1; it reads IEADHVAFYG…KDSNFTPAAN (85 aa). At 25–216 the chain is on the extracellular side; that stretch reads IEADHVAFYG…IPAPMSELTE (192 aa). N-linked (GlcNAc...) asparagine glycans are attached at residues Asn103 and Asn143. Positions 110 to 203 are alpha-2; that stretch reads EAPQATVFPK…GLEEPVLKHW (94 aa). One can recognise an Ig-like C1-type domain in the interval 112–204; sequence PQATVFPKSP…LEEPVLKHWE (93 aa). An intrachain disulfide couples Cys132 to Cys188. A connecting peptide region spans residues 204–216; that stretch reads EPEIPAPMSELTE. A helical transmembrane segment spans residues 217 to 242; sequence TVVCALGLSVGLVGIVVGTIFIIQGL. At 243–254 the chain is on the cytoplasmic side; that stretch reads RSGGTSRHPGPL.

It belongs to the MHC class II family.

Its subcellular location is the membrane. This is H-2 class II histocompatibility antigen, I-E alpha chain from Mus musculus (Mouse).